The following is a 137-amino-acid chain: Small ribosomal subunit protein uS12 (137 aa).

Residues 1–57 are disordered; it reads MPTINQLIRKGRKSKGSKSNSPALNFGYNSYKKVQTNNSAPQKRGVATRVGTMTPKK. The span at 32-41 shows a compositional bias: polar residues; the sequence is KKVQTNNSAP. Asp102 bears the 3-methylthioaspartic acid mark.

It belongs to the universal ribosomal protein uS12 family. As to quaternary structure, part of the 30S ribosomal subunit. Contacts proteins S8 and S17. May interact with IF1 in the 30S initiation complex.

With S4 and S5 plays an important role in translational accuracy. Functionally, interacts with and stabilizes bases of the 16S rRNA that are involved in tRNA selection in the A site and with the mRNA backbone. Located at the interface of the 30S and 50S subunits, it traverses the body of the 30S subunit contacting proteins on the other side and probably holding the rRNA structure together. The combined cluster of proteins S8, S12 and S17 appears to hold together the shoulder and platform of the 30S subunit. In Ligilactobacillus salivarius (strain UCC118) (Lactobacillus salivarius), this protein is Small ribosomal subunit protein uS12.